The chain runs to 349 residues: Secondary metabolism regulator LAE1 (349 aa).

The segment at 1 to 46 (MSSRNAPSGCVAPSPATAAPPSPTNLRLTVGQSGSESANEPGGEPE) is disordered. Over residues 25-38 (NLRLTVGQSGSESA) the composition is skewed to polar residues.

The protein belongs to the methyltransferase superfamily. LaeA methyltransferase family. In terms of assembly, component of the heterotrimeric velvet complex composed of LAE1, VEL1 and VEL2; VEL1 acting as a bridging protein between LAE1 and VEL2.

The protein resides in the nucleus. It carries out the reaction L-methionyl-[protein] + S-adenosyl-L-methionine = S-methyl-L-methionyl-[protein] + S-adenosyl-L-homocysteine. Methyltransferase that performs automethylation. No other methyl-accepting substrate has been identified yet. Component of the velvet transcription factor complex that acts as a global regulator for secondary metabolite gene expression. Controls the expression of the gamma-pentyl-pyrone gene clusters. Required for the expression of cellulase. Regulates asexual sporulation (conidiation) by environmental stimuli such as light and/or mechanical injury. Required for oxidative stress tolerance. Also plays a role in defense and parasitism on other fungi. The chain is Secondary metabolism regulator LAE1 from Hypocrea atroviridis (strain ATCC 20476 / IMI 206040) (Trichoderma atroviride).